A 257-amino-acid chain; its full sequence is Probable dihydroorotate dehydrogenase B (NAD(+)), electron transfer subunit (257 aa).

Residues 2 to 89 form the FAD-binding FR-type domain; it reads EKPVICRIKE…RGPYGTYFEP (88 aa). [2Fe-2S] cluster contacts are provided by C208, C213, C216, and C226.

Belongs to the PyrK family. In terms of assembly, heterotetramer of 2 PyrK and 2 PyrD type B subunits. [2Fe-2S] cluster is required as a cofactor. It depends on FAD as a cofactor.

It participates in pyrimidine metabolism; UMP biosynthesis via de novo pathway; orotate from (S)-dihydroorotate (NAD(+) route): step 1/1. In terms of biological role, responsible for channeling the electrons from the oxidation of dihydroorotate from the FMN redox center in the PyrD type B subunit to the ultimate electron acceptor NAD(+). The sequence is that of Probable dihydroorotate dehydrogenase B (NAD(+)), electron transfer subunit from Methanocaldococcus jannaschii (strain ATCC 43067 / DSM 2661 / JAL-1 / JCM 10045 / NBRC 100440) (Methanococcus jannaschii).